The sequence spans 431 residues: Adenylosuccinate synthetase (431 aa).

GTP contacts are provided by residues 12–18 and 40–42; these read GDEGKGK and GHT. Residue D13 is the Proton acceptor of the active site. Residues D13 and G40 each coordinate Mg(2+). IMP is bound by residues 13 to 16, 38 to 41, T129, R143, Q224, T239, and R303; these read DEGK and NAGH. H41 serves as the catalytic Proton donor. Residue 299–305 participates in substrate binding; the sequence is VTTGRAR. GTP is bound by residues R305, 331–333, and 413–415; these read KLD and GVG.

Belongs to the adenylosuccinate synthetase family. In terms of assembly, homodimer. The cofactor is Mg(2+).

It localises to the cytoplasm. The enzyme catalyses IMP + L-aspartate + GTP = N(6)-(1,2-dicarboxyethyl)-AMP + GDP + phosphate + 2 H(+). It participates in purine metabolism; AMP biosynthesis via de novo pathway; AMP from IMP: step 1/2. Functionally, plays an important role in the de novo pathway of purine nucleotide biosynthesis. Catalyzes the first committed step in the biosynthesis of AMP from IMP. In Mycolicibacterium vanbaalenii (strain DSM 7251 / JCM 13017 / BCRC 16820 / KCTC 9966 / NRRL B-24157 / PYR-1) (Mycobacterium vanbaalenii), this protein is Adenylosuccinate synthetase.